A 906-amino-acid polypeptide reads, in one-letter code: Cadherin-2 (906 aa).

The N-terminal stretch at 1-25 is a signal peptide; sequence MCRIVGAPRTLLPLLAALLQASVDA. Residues 26 to 159 constitute a propeptide that is removed on maturation; sequence SGEISLCKTG…HNGYLQRQKR (134 aa). Phosphoserine occurs at positions 96 and 135. Cadherin domains follow at residues 160–267, 268–392, 393–497, 498–603, and 604–714; these read DWVI…RPEF, LHQV…GEVP, ENRV…NPYF, APNP…DNAP, and QVLP…DVDR. Topologically, residues 160–724 are extracellular; sequence DWVIPPINLP…IVGAGLGTGA (565 aa). Residue Glu170 coordinates Ca(2+). N-linked (GlcNAc...) asparagine glycosylation is present at Asn190. Ca(2+)-binding residues include Asp226, Glu228, Asp259, Met260, Asn261, Asp262, and Asn263. N-linked (GlcNAc...) asparagine glycosylation occurs at Asn273. Positions 293, 295, and 301 each coordinate Ca(2+). Asn325 carries N-linked (GlcNAc...) asparagine glycosylation. Asp353 contacts Ca(2+). Residues Asn357, Asn402, Asn572, Asn622, Asn651, and Asn692 are each glycosylated (N-linked (GlcNAc...) asparagine). The helical transmembrane segment at 725-746 threads the bilayer; sequence IIAILLCIIILLILVLMFVVWM. Topologically, residues 747 to 906 are cytoplasmic; that stretch reads KRRDKERQAK…LADMYGGGDD (160 aa). Residues 863–880 are compositionally biased toward low complexity; it reads SGSTAGSLSSLNSSSSGG. Positions 863–884 are disordered; that stretch reads SGSTAGSLSSLNSSSSGGEQDY.

As to quaternary structure, homodimer (via extracellular region). Can also form heterodimers with other cadherins (via extracellular region). Dimerization occurs in trans, i.e. with a cadherin chain from another cell. Interacts with CDCP1. Interacts with PCDH8; this complex may also include TAOK2. The interaction with PCDH8 may lead to internalization through TAOK2/p38 MAPK pathway. Identified in a complex containing FGFR4, NCAM1, CDH2, PLCG1, FRS2, SRC, SHC1, GAP43 and CTTN. May interact with OBSCN (via protein kinase domain 2). Interacts with FBXO45. In terms of processing, cleaved by MMP24. Ectodomain cleavage leads to the generation of a soluble 90 kDa N-terminal soluble fragment and a 45 kDa membrane-bound C-terminal fragment 1 (CTF1), which is further cleaved by gamma-secretase into a 35 kDa. Cleavage in neural stem cells by MMP24 affects CDH2-mediated anchorage of neural stem cells to ependymocytes in the adult subependymal zone, leading to modulate neural stem cell quiescence. May be phosphorylated by OBSCN. Detected in liver, kidney, heart and brain capillaries.

The protein resides in the cell membrane. It localises to the sarcolemma. Its subcellular location is the cell junction. It is found in the cell surface. The protein localises to the desmosome. The protein resides in the adherens junction. In terms of biological role, calcium-dependent cell adhesion protein; preferentially mediates homotypic cell-cell adhesion by dimerization with a CDH2 chain from another cell. Cadherins may thus contribute to the sorting of heterogeneous cell types. Acts as a regulator of neural stem cells quiescence by mediating anchorage of neural stem cells to ependymocytes in the adult subependymal zone: upon cleavage by MMP24, CDH2-mediated anchorage is affected, leading to modulate neural stem cell quiescence. Plays a role in cell-to-cell junction formation between pancreatic beta cells and neural crest stem (NCS) cells, promoting the formation of processes by NCS cells. Required for proper neurite branching. Required for pre- and postsynaptic organization. CDH2 may be involved in neuronal recognition mechanism. In hippocampal neurons, may regulate dendritic spine density. The polypeptide is Cadherin-2 (CDH2) (Bos taurus (Bovine)).